Consider the following 348-residue polypeptide: Farnesoic acid carboxyl-O-methyltransferase (348 aa).

S-adenosyl-L-methionine is bound at residue Y16. Substrate is bound by residues Y16 and H19–Q23. Residues G57, G57–C58, N63, F94–S97, S123–F125, and S140–S142 each bind S-adenosyl-L-methionine. Position 141 to 145 (Y141 to F145) interacts with substrate. Positions 162, 247, and 249 each coordinate Mg(2+).

Belongs to the methyltransferase superfamily. SABATH family. As to quaternary structure, homodimer. It depends on Mg(2+) as a cofactor. As to expression, mostly expressed in leaves and, at very low levels, in roots, stems, flowers and siliques.

The enzyme catalyses (2E,6E)-farnesoate + S-adenosyl-L-methionine = methyl (2E,6E)-farnesoate + S-adenosyl-L-homocysteine. The catalysed reaction is juvenile hormone III carboxylate + S-adenosyl-L-methionine = juvenile hormone III + S-adenosyl-L-homocysteine. The protein operates within sesquiterpene biosynthesis. Activated by Mn(2+) ions. Strongly inhibited by Cu(2+), Zn(2+), Fe(3+) and Fe(2+) ions. Moderately inhibited by Na(+) and Ca(2+) ions. Rapidly degraded at temperatures above 40 degrees Celsius. Its function is as follows. May catalyze the production of the insect juvenile hormone methyl farnesoate (MeFA) to trigger defense against insect herbivory. The polypeptide is Farnesoic acid carboxyl-O-methyltransferase (Arabidopsis thaliana (Mouse-ear cress)).